The primary structure comprises 388 residues: Formate-dependent phosphoribosylglycinamide formyltransferase (388 aa).

N(1)-(5-phospho-beta-D-ribosyl)glycinamide is bound by residues 15 to 16 and Glu75; that span reads EL. ATP contacts are provided by residues Arg107, Lys148, 153 to 158, 188 to 191, and Glu196; these read SSGKGQ and EEFL. The region spanning 112 to 302 is the ATP-grasp domain; it reads DLASAELALL…EFELHLRAVL (191 aa). Mg(2+)-binding residues include Glu261 and Glu273. N(1)-(5-phospho-beta-D-ribosyl)glycinamide contacts are provided by residues Asp280, Lys350, and 357 to 358; that span reads RR.

This sequence belongs to the PurK/PurT family. As to quaternary structure, homodimer.

The catalysed reaction is N(1)-(5-phospho-beta-D-ribosyl)glycinamide + formate + ATP = N(2)-formyl-N(1)-(5-phospho-beta-D-ribosyl)glycinamide + ADP + phosphate + H(+). Its pathway is purine metabolism; IMP biosynthesis via de novo pathway; N(2)-formyl-N(1)-(5-phospho-D-ribosyl)glycinamide from N(1)-(5-phospho-D-ribosyl)glycinamide (formate route): step 1/1. Functionally, involved in the de novo purine biosynthesis. Catalyzes the transfer of formate to 5-phospho-ribosyl-glycinamide (GAR), producing 5-phospho-ribosyl-N-formylglycinamide (FGAR). Formate is provided by PurU via hydrolysis of 10-formyl-tetrahydrofolate. The protein is Formate-dependent phosphoribosylglycinamide formyltransferase of Prochlorococcus marinus (strain MIT 9313).